Here is a 145-residue protein sequence, read N- to C-terminus: Cytochrome c2 (145 aa).

The N-terminal stretch at 1–21 is a signal peptide; that stretch reads MKFQVKALAAIAAFAALPALA. Q22 is subject to Pyrrolidone carboxylic acid. Positions 36, 39, 40, and 121 each coordinate heme c.

It belongs to the cytochrome c family. In terms of processing, binds 1 heme c group covalently per subunit.

Its subcellular location is the periplasm. Its function is as follows. Cytochrome c2 is found mainly in purple, non-sulfur, photosynthetic bacteria where it functions as the electron donor to the oxidized bacteriochlorophyll in the photophosphorylation pathway. However, it may also have a role in the respiratory chain and is found in some non-photosynthetic bacteria. The polypeptide is Cytochrome c2 (cycA) (Cereibacter sphaeroides (strain ATCC 17023 / DSM 158 / JCM 6121 / CCUG 31486 / LMG 2827 / NBRC 12203 / NCIMB 8253 / ATH 2.4.1.) (Rhodobacter sphaeroides)).